Here is a 476-residue protein sequence, read N- to C-terminus: tRNA(Ile)-lysidine synthase (476 aa).

30-35 (SGGPDS) is a binding site for ATP.

The protein belongs to the tRNA(Ile)-lysidine synthase family.

It localises to the cytoplasm. The catalysed reaction is cytidine(34) in tRNA(Ile2) + L-lysine + ATP = lysidine(34) in tRNA(Ile2) + AMP + diphosphate + H(+). In terms of biological role, ligates lysine onto the cytidine present at position 34 of the AUA codon-specific tRNA(Ile) that contains the anticodon CAU, in an ATP-dependent manner. Cytidine is converted to lysidine, thus changing the amino acid specificity of the tRNA from methionine to isoleucine. The protein is tRNA(Ile)-lysidine synthase of Bacillus thuringiensis subsp. konkukian (strain 97-27).